Here is a 293-residue protein sequence, read N- to C-terminus: B1-hordein (293 aa).

Positions 1-19 (MKTFLIFALLAIAATSTIA) are cleaved as a signal peptide. Positions 20–90 (QQQPFPQQPI…PPFWQQKPFP (71 aa)) are disordered. The segment covering 25-81 (PQQPIPQQPQPYPQQPQPYPQQPFPPQQPFPQQPVPQQPQPYPQQPFPPQQPFPQQP) has biased composition (pro residues).

This sequence belongs to the gliadin/glutenin family. In terms of tissue distribution, developing endosperm.

Functionally, sulfur-rich seed storage protein. The protein is B1-hordein of Hordeum vulgare (Barley).